A 186-amino-acid chain; its full sequence is Peptidyl-tRNA hydrolase (186 aa).

Tyr13 serves as a coordination point for tRNA. His18 functions as the Proton acceptor in the catalytic mechanism. TRNA is bound by residues Tyr59, Asn61, and Asn107.

The protein belongs to the PTH family. Monomer.

Its subcellular location is the cytoplasm. The catalysed reaction is an N-acyl-L-alpha-aminoacyl-tRNA + H2O = an N-acyl-L-amino acid + a tRNA + H(+). Hydrolyzes ribosome-free peptidyl-tRNAs (with 1 or more amino acids incorporated), which drop off the ribosome during protein synthesis, or as a result of ribosome stalling. Its function is as follows. Catalyzes the release of premature peptidyl moieties from peptidyl-tRNA molecules trapped in stalled 50S ribosomal subunits, and thus maintains levels of free tRNAs and 50S ribosomes. The chain is Peptidyl-tRNA hydrolase from Thermotoga petrophila (strain ATCC BAA-488 / DSM 13995 / JCM 10881 / RKU-1).